Reading from the N-terminus, the 883-residue chain is AP-5 complex subunit beta-1 (883 aa).

Probably part of the adaptor protein complex 5 (AP-5).

In terms of biological role, as part of AP-5, a probable fifth adaptor protein complex, it may be involved in endosomal transport. The sequence is that of AP-5 complex subunit beta-1 (ap5b1) from Xenopus tropicalis (Western clawed frog).